We begin with the raw amino-acid sequence, 92 residues long: UPF0223 protein SGO_1052 (92 aa).

The protein belongs to the UPF0223 family.

This Streptococcus gordonii (strain Challis / ATCC 35105 / BCRC 15272 / CH1 / DL1 / V288) protein is UPF0223 protein SGO_1052.